We begin with the raw amino-acid sequence, 591 residues long: Aspartate--tRNA(Asp/Asn) ligase (591 aa).

E174 serves as a coordination point for L-aspartate. An aspartate region spans residues 198–201 (QLFK). Residue R220 coordinates L-aspartate. Residues 220–222 (RDE) and Q229 each bind ATP. H450 lines the L-aspartate pocket. E483 is a binding site for ATP. L-aspartate is bound at residue R490. 535–538 (GLDR) lines the ATP pocket.

This sequence belongs to the class-II aminoacyl-tRNA synthetase family. Type 1 subfamily. Homodimer.

It localises to the cytoplasm. The catalysed reaction is tRNA(Asx) + L-aspartate + ATP = L-aspartyl-tRNA(Asx) + AMP + diphosphate. Its function is as follows. Aspartyl-tRNA synthetase with relaxed tRNA specificity since it is able to aspartylate not only its cognate tRNA(Asp) but also tRNA(Asn). Reaction proceeds in two steps: L-aspartate is first activated by ATP to form Asp-AMP and then transferred to the acceptor end of tRNA(Asp/Asn). This Ectopseudomonas mendocina (strain ymp) (Pseudomonas mendocina) protein is Aspartate--tRNA(Asp/Asn) ligase.